The chain runs to 524 residues: Cytochrome P450 monooxygenase drtD (524 aa).

Residues 2–22 (SDTYLVAASGLAVCFFVLYLL) traverse the membrane as a helical segment. Cysteine 418 is a binding site for heme.

It belongs to the cytochrome P450 family. Requires heme as cofactor.

The protein localises to the membrane. The protein operates within secondary metabolite biosynthesis; terpenoid biosynthesis. In terms of biological role, cytochrome P450 monooxygenase; part of the gene cluster that mediates the biosynthesis of various drimane-type sesquiterpene esters, compounds that exhibit diverse biological activities and are widely present in eukaryotes. The pathway begins with the synthesis of the backbone drimenol by the terpene cyclase drtB using farnesyl pyrophosphate (FPP) as substrate. The cytochrome P450 monooxygenase drtD is then responsible for the hydroxylations at C-6, C-9 and C-12, as well as the oxidation of hydroxyl groups at C-6 and C-11 to a ketone and an aldehyde, respectively. Then, the biosynthesis can go in two directions, either the hydroxylated drimenol is further hydroxylated at C-2 and C-3 by an enzyme(s) not associated with the drt cluster, or the FAD-binding oxidoreductase drtC further oxidizes C-11 or C-12 to form the butyrolactone ring. DrtB, drtD and drtC are solely responsible for the formation of the different drimane structures observed during drimane sesquiterpenes biosynthesis. The polyketide synthase drtA synthesizes different lengths (C6 and C8) of PKS chains, which are then oxidized to varying degrees by the short-chain dehydrogenase drtF. Finally, these PKS chains are transferred onto drimane sesquiterpenes by the acyltransferase drtE, forming the sesquiterpene esters. In addition to the different fatty acyl-CoA chains produced by drtA, drtE is also able to use cinnamoyl-CoA as a substrate. This is Cytochrome P450 monooxygenase drtD from Aspergillus calidoustus.